The sequence spans 72 residues: MKMMIPVIFSILLLIFSLSSTAMSLEDEQENMEERAEIDFSGIPEDIIKQIKETNAKPPARFDPAAFEKSDD.

An N-terminal signal peptide occupies residues 1-24; sequence MKMMIPVIFSILLLIFSLSSTAMS. The propeptide occupies 25–35; that stretch reads LEDEQENMEER. A Phosphoserine modification is found at S41. The disordered stretch occupies residues 53–72; the sequence is ETNAKPPARFDPAAFEKSDD. The propeptide occupies 61-72; the sequence is RFDPAAFEKSDD.

This sequence belongs to the non-disulfide-bridged peptide (NDBP) superfamily. Post-translationally, undergoes enzymatic cleavages by carboxypeptidases, endopeptidases, and aminopeptidases resulting in at least 46 fragments of this protein. As to expression, expressed by the venom gland.

The protein localises to the secreted. Its function is as follows. Agonist of the B2 bradykinin receptor (BDKRB2). Potentiates the hypotensive effect of bradykinin (BK) and induces a direct vasorelaxing effect independent of BK, by endothelium- and nitric oxide (NO)-dependent mechanisms in rat aortic ring preparations. Also exerts proangiogenic, antiinflammatory, and antifibrogenic activities. Does not inhibit the angiotensin-converting enzyme (ACE) but increases its activity, and inhibits neprilysin (NEP) in a non-competitive manner. Exerts intermediate cytotoxicity and pro-inflammatory effects on mouse macrophages, and increases the phagocytic activity of these murine cells. Presents moderate hemolytic activity at physiological concentrations (micromolar range). Does not induce mast cell degranulation, lactate dehydrogenase (LDH) release from mast cells and antimicrobial effects. In vivo, causes intense pain (but no edema formation), when injected in mice hind paws. Also induces discomfort and anxiety in mice, as it moderately diminishes locomotion and moderately increases rearing behavior. The protein is Hypotensin-1 of Tityus serrulatus (Brazilian scorpion).